Reading from the N-terminus, the 715-residue chain is Epidermal growth factor receptor kinase substrate 8-like protein 2 (715 aa).

Residues 46 to 202 enclose the PID domain; sequence MHETSQYHVQ…RQRQSILPPP (157 aa). A disordered region spans residues 183 to 243; the sequence is QTLKGHQEKI…GFRRRESQEE (61 aa). Over residues 199–208 the composition is skewed to pro residues; sequence LPPPQGPAPI. 2 stretches are compositionally biased toward basic and acidic residues: residues 213–222 and 234–243; these read RGGDSPEAKN and GFRRRESQEE. Ser-240 carries the post-translational modification Phosphoserine. Thr-303 is subject to Phosphothreonine. Residues 448–487 form a disordered region; it reads VSPVSRQSIRNSQKHSPTSEPTPPGDALPPVSSPHTHRGY. At Ser-449 the chain carries Phosphoserine. A compositionally biased stretch (polar residues) spans 451–466; sequence VSRQSIRNSQKHSPTS. Thr-469 bears the Phosphothreonine mark. Positions 492-551 constitute an SH3 domain; that stretch reads AMAKYVKILYDFTARNANELSVLKDEVLEVLEDGRQWWKLRSRSGQAGYVPCNILGEARP. At Ser-570 the chain carries Phosphoserine.

The protein belongs to the EPS8 family. In terms of assembly, interacts with ABI1. Part of a complex that contains SOS1, ABI1 and EPS8L2. Associates with F-actin. Detected in fibroblasts and placenta.

It is found in the cytoplasm. It localises to the cell projection. Its subcellular location is the stereocilium. Functionally, stimulates guanine exchange activity of SOS1. May play a role in membrane ruffling and remodeling of the actin cytoskeleton. In the cochlea, is required for stereocilia maintenance in adult hair cells. This Homo sapiens (Human) protein is Epidermal growth factor receptor kinase substrate 8-like protein 2 (EPS8L2).